The chain runs to 280 residues: Feruloyl esterase 1 (280 aa).

Residues 1–20 (MKAFATRALAFSVAAGQALA) form the signal peptide. Disulfide bonds link cysteine 49–cysteine 278, cysteine 111–cysteine 114, and cysteine 247–cysteine 254. N-linked (GlcNAc...) asparagine glycosylation occurs at asparagine 99. The active-site Nucleophile is the serine 153. Aspartate 214 functions as the Charge relay system in the catalytic mechanism. Catalysis depends on histidine 267, which acts as the Charge relay system.

Belongs to the AB hydrolase superfamily. FaeA family. In terms of processing, glycosylated.

The protein localises to the secreted. The enzyme catalyses feruloyl-polysaccharide + H2O = ferulate + polysaccharide.. Its activity is regulated as follows. Metal or basic ions Mn(2+), Ni(+), Mg(2+), and NH(4)(+) decrease the activity by 4.4% to 14.1%. The enzymatic activity is inhibited by Zn(2+) at a low concentration (1 mM) but not a high concentration (5 mM). Loses about a quarter of activity by the addition of 1 mM of Cu(2+) or Fe(3+) and activity is completely suppressed when the concentration was up to 5 mM. Low concentrations (0.25 and 0.5 M) of NaCl improve the activity by 5.6 % or 8.3%, respectively. Involved in degradation of plant cell walls. Hydrolyzes the feruloyl-arabinose ester bond in arabinoxylans, and the feruloyl-galactose ester bond in pectin. The sequence is that of Feruloyl esterase 1 from Penicillium parvum (Eupenicillium parvum).